The following is a 506-amino-acid chain: Maturase K (506 aa).

This sequence belongs to the intron maturase 2 family. MatK subfamily.

It is found in the plastid. The protein resides in the chloroplast. Functionally, usually encoded in the trnK tRNA gene intron. Probably assists in splicing its own and other chloroplast group II introns. The protein is Maturase K of Prunus persica (Peach).